The following is a 225-amino-acid chain: Two-component response regulator PhoP (225 aa).

The region spanning 2–116 (KLLVVEDEAL…ELEARLNALL (115 aa)) is the Response regulatory domain. A 4-aspartylphosphate modification is found at D51. Positions 124-222 (QSTIEAGPLV…VRGQGYLFTE (99 aa)) form a DNA-binding region, ompR/PhoB-type.

In terms of biological role, member of the two-component regulatory system PhoP/PhoQ that plays a role in the regulation of resistance towards polymyxin B and cationic antimicrobial peptides in response to limiting concentrations of Mg(2+). Functions as a transcriptional activator by direct binding to a cis-acting sequence upstream of the target gene promoters including oprH and pmrH promoters. The protein is Two-component response regulator PhoP (phoP) of Pseudomonas aeruginosa (strain ATCC 15692 / DSM 22644 / CIP 104116 / JCM 14847 / LMG 12228 / 1C / PRS 101 / PAO1).